Here is a 257-residue protein sequence, read N- to C-terminus: UPF0246 protein Spea_1078 (257 aa).

Belongs to the UPF0246 family.

The sequence is that of UPF0246 protein Spea_1078 from Shewanella pealeana (strain ATCC 700345 / ANG-SQ1).